The sequence spans 428 residues: Phosphomethylpyrimidine synthase 2 (428 aa).

Substrate contacts are provided by residues methionine 94, tyrosine 123, histidine 162, serine 184 to glycine 186, asparagine 225 to arginine 228, and glutamate 264. Histidine 268 contacts Zn(2+). Residue tyrosine 291 participates in substrate binding. Histidine 332 provides a ligand contact to Zn(2+). 3 residues coordinate [4Fe-4S] cluster: cysteine 408, cysteine 411, and cysteine 415.

Belongs to the ThiC family. It depends on [4Fe-4S] cluster as a cofactor.

It carries out the reaction 5-amino-1-(5-phospho-beta-D-ribosyl)imidazole + S-adenosyl-L-methionine = 4-amino-2-methyl-5-(phosphooxymethyl)pyrimidine + CO + 5'-deoxyadenosine + formate + L-methionine + 3 H(+). Its pathway is cofactor biosynthesis; thiamine diphosphate biosynthesis. Functionally, catalyzes the synthesis of the hydroxymethylpyrimidine phosphate (HMP-P) moiety of thiamine from aminoimidazole ribotide (AIR) in a radical S-adenosyl-L-methionine (SAM)-dependent reaction. This is Phosphomethylpyrimidine synthase 2 from Methanosarcina mazei (strain ATCC BAA-159 / DSM 3647 / Goe1 / Go1 / JCM 11833 / OCM 88) (Methanosarcina frisia).